Reading from the N-terminus, the 410-residue chain is Enterobactin exporter EntS (410 aa).

Residues 1 to 21 (MNKQSWLLNLSLLKTHPAFRA) are Cytoplasmic-facing. The helical transmembrane segment at 22–42 (VFLARFISIVSLGLLGVAVPV) threads the bilayer. Residues 43 to 55 (QIQMMTHSTWQVG) lie on the Periplasmic side of the membrane. Residues 56–76 (LSVTLTGGAMFVGLMVGGVLA) form a helical membrane-spanning segment. Residues 77–83 (DRYERKK) lie on the Cytoplasmic side of the membrane. Residues 84–104 (VILLARGTCGIGFIGLCLNAL) traverse the membrane as a helical segment. Residues 105-109 (LPEPS) lie on the Periplasmic side of the membrane. A helical membrane pass occupies residues 110 to 130 (LLAIYLLGLWDGFFASLGVTA). At 131–156 (LLAATSALVGRENLMQAGAITMLTVR) the chain is on the cytoplasmic side. The helical transmembrane segment at 157 to 177 (LGSVISPMIGGLLLATGGVAW) threads the bilayer. A topological domain (periplasmic) is located at residue asparagine 178. Residues 179-199 (YGLAAAGTFITLLPLLSLPEL) traverse the membrane as a helical segment. Residues 200 to 218 (PPPPQPLEHPLKSLLAGFR) lie on the Cytoplasmic side of the membrane. A helical membrane pass occupies residues 219-233 (FLLASPLLGGLLTMA). The Periplasmic portion of the chain corresponds to 234–250 (SAVLVLYPALADNWQMS). The helical transmembrane segment at 251–271 (AAQIGFLYAAIPLGAAIGALT) threads the bilayer. The Cytoplasmic segment spans residues 272–281 (SGKLAHSARP). Residues 282-301 (GLLMLLSTLGSFLAIGLFGL) traverse the membrane as a helical segment. Topologically, residues 302–307 (MPMWIL) are periplasmic. The chain crosses the membrane as a helical span at residues 308-330 (GVVCLALFGWLSAVSSLLQYTML). At 331–350 (QTQTPEAMLGRINGLWTAQN) the chain is on the cytoplasmic side. Residues 351 to 371 (VTGDAIGAALLGGLGAMMTPV) form a helical membrane-spanning segment. Position 372 (alanine 372) is a topological domain, periplasmic. A helical transmembrane segment spans residues 373–393 (SASASGFGLLIIGVLLLLVLV). The Cytoplasmic portion of the chain corresponds to 394 to 410 (ELRRFRQTPPQVTASDS).

Belongs to the major facilitator superfamily. EntS (TC 2.A.1.38) family.

It localises to the cell inner membrane. Component of an export pathway for enterobactin. In Shigella flexneri, this protein is Enterobactin exporter EntS.